The chain runs to 159 residues: Transcriptional repressor NrdR (159 aa).

The segment at 3–34 is a zinc-finger region; the sequence is CPFCRHEDTQVVDSRVSEDGAAIRRRRRCSAC. Residues 49–139 form the ATP-cone domain; that stretch reads PAVVKKDGSR…VYRRFEDVSE (91 aa).

It belongs to the NrdR family. Zn(2+) serves as cofactor.

In terms of biological role, negatively regulates transcription of bacterial ribonucleotide reductase nrd genes and operons by binding to NrdR-boxes. The protein is Transcriptional repressor NrdR of Burkholderia multivorans (strain ATCC 17616 / 249).